A 334-amino-acid polypeptide reads, in one-letter code: Protein CapI (334 aa).

Ser-126 is a binding site for substrate. Tyr-151 (proton acceptor) is an active-site residue.

It belongs to the NAD(P)-dependent epimerase/dehydratase family.

It participates in capsule biogenesis; capsule polysaccharide biosynthesis. Required for the biosynthesis of type 1 capsular polysaccharide. The chain is Protein CapI (capI) from Staphylococcus aureus.